A 446-amino-acid chain; its full sequence is uncharacterized protein (446 aa).

The next 4 helical transmembrane spans lie at 69–89 (FWLW…VTYL), 98–118 (FFLV…VWLA), 169–189 (HSLW…LLLV), and 247–267 (GLLV…AWVV).

It localises to the membrane. This is an uncharacterized protein from Neisseria meningitidis serogroup B (strain ATCC BAA-335 / MC58).